A 111-amino-acid polypeptide reads, in one-letter code: Large ribosomal subunit protein uL22 (111 aa).

It belongs to the universal ribosomal protein uL22 family. As to quaternary structure, part of the 50S ribosomal subunit.

Its function is as follows. This protein binds specifically to 23S rRNA; its binding is stimulated by other ribosomal proteins, e.g. L4, L17, and L20. It is important during the early stages of 50S assembly. It makes multiple contacts with different domains of the 23S rRNA in the assembled 50S subunit and ribosome. In terms of biological role, the globular domain of the protein is located near the polypeptide exit tunnel on the outside of the subunit, while an extended beta-hairpin is found that lines the wall of the exit tunnel in the center of the 70S ribosome. This chain is Large ribosomal subunit protein uL22, found in Geotalea daltonii (strain DSM 22248 / JCM 15807 / FRC-32) (Geobacter daltonii).